The primary structure comprises 123 residues: Small ribosomal subunit protein uS12 (123 aa).

The residue at position 89 (aspartate 89) is a 3-methylthioaspartic acid.

The protein belongs to the universal ribosomal protein uS12 family. In terms of assembly, part of the 30S ribosomal subunit. Contacts proteins S8 and S17. May interact with IF1 in the 30S initiation complex.

In terms of biological role, with S4 and S5 plays an important role in translational accuracy. Its function is as follows. Interacts with and stabilizes bases of the 16S rRNA that are involved in tRNA selection in the A site and with the mRNA backbone. Located at the interface of the 30S and 50S subunits, it traverses the body of the 30S subunit contacting proteins on the other side and probably holding the rRNA structure together. The combined cluster of proteins S8, S12 and S17 appears to hold together the shoulder and platform of the 30S subunit. This chain is Small ribosomal subunit protein uS12, found in Caulobacter vibrioides (strain ATCC 19089 / CIP 103742 / CB 15) (Caulobacter crescentus).